Reading from the N-terminus, the 108-residue chain is Small ribosomal subunit protein eS25A (108 aa).

The segment covering 1-20 (MPPKQQLSKAAKAAAALAGG) has biased composition (low complexity). Residues 1–30 (MPPKQQLSKAAKAAAALAGGKKSKKKWSKK) are disordered. Pro2 carries the n,N-dimethylproline; by NTM1 modification. The segment covering 21–30 (KKSKKKWSKK) has biased composition (basic residues).

Belongs to the eukaryotic ribosomal protein eS25 family. As to quaternary structure, component of the small ribosomal subunit (SSU). Mature yeast ribosomes consist of a small (40S) and a large (60S) subunit. The 40S small subunit contains 1 molecule of ribosomal RNA (18S rRNA) and 33 different proteins (encoded by 57 genes). The large 60S subunit contains 3 rRNA molecules (25S, 5.8S and 5S rRNA) and 46 different proteins (encoded by 81 genes).

It localises to the cytoplasm. Component of the ribosome, a large ribonucleoprotein complex responsible for the synthesis of proteins in the cell. The small ribosomal subunit (SSU) binds messenger RNAs (mRNAs) and translates the encoded message by selecting cognate aminoacyl-transfer RNA (tRNA) molecules. The large subunit (LSU) contains the ribosomal catalytic site termed the peptidyl transferase center (PTC), which catalyzes the formation of peptide bonds, thereby polymerizing the amino acids delivered by tRNAs into a polypeptide chain. The nascent polypeptides leave the ribosome through a tunnel in the LSU and interact with protein factors that function in enzymatic processing, targeting, and the membrane insertion of nascent chains at the exit of the ribosomal tunnel. The polypeptide is Small ribosomal subunit protein eS25A (Saccharomyces cerevisiae (strain ATCC 204508 / S288c) (Baker's yeast)).